A 148-amino-acid chain; its full sequence is Endothelial differentiation-related factor 1 (148 aa).

Ala-2 bears the N-acetylalanine mark. Ser-4 is modified (phosphoserine). Lys-25 carries the post-translational modification N6-methyllysine. The interval 34–67 is disordered; the sequence is RGEDVETSKKWAAGQNKQHSITKNTAKLDRETEE. Residues 37–113 form an interaction with NR5A2, PPARG and NR1H3 region; the sequence is DVETSKKWAA…QVIADYESGR (77 aa). The segment covering 48–58 has biased composition (polar residues); it reads QNKQHSITKNT. Residues 69-108 form an interaction with TBP and NR5A1 region; the sequence is HHDRVTLEVGKVIQRGRQSKGLTQKDLATKINEKPQVIAD. The IQ motif motif lies at 81–88; sequence IQRGRQSK. Residues 81-135 form the HTH cro/C1-type domain; it reads IQRGRQSKGLTQKDLATKINEKPQVIADYESGRAIPNNQVLGKIERAIGLKLRGK. The H-T-H motif DNA-binding region spans 92–111; the sequence is QKDLATKINEKPQVIADYES.

Interacts with TBP and the transcription factor IID (TFIID) complex, NR5A2, NR1H3 and PPARG. Interaction with TBP is regulated by phosphorylation. Binds NR5A1, ATF1, FOS and JUN via their conserved basic region. Binding to calmodulin is regulated by calcium and phosphorylation of the IQ motif. Phosphorylated. Expressed in brain, liver, kidney and heart (at protein level). Also expressed in testis.

Its subcellular location is the cytoplasm. It is found in the nucleus. In terms of biological role, transcriptional coactivator stimulating NR5A1 and ligand-dependent NR1H3/LXRA and PPARG transcriptional activities. Enhances the DNA-binding activity of ATF1, ATF2, CREB1 and NR5A1. Regulates nitric oxid synthase activity probably by sequestering calmodulin in the cytoplasm. Might function in endothelial cells differentiation, hormone-induced cardiomyocytes hypertrophy and lipid metabolism. In Mus musculus (Mouse), this protein is Endothelial differentiation-related factor 1 (Edf1).